Reading from the N-terminus, the 346-residue chain is O-methyltransferase atr3 (346 aa).

Disordered regions lie at residues 1-22 and 52-88; these read MTSV…DDLM and GLKS…WYHA. Residues 190 to 191 and 217 to 218 each bind S-adenosyl-L-methionine; these read DL and DI.

It belongs to the class I-like SAM-binding methyltransferase superfamily. Homodimer.

It catalyses the reaction 4-O-demethylbarbatate + S-adenosyl-L-methionine = proatranorin I + S-adenosyl-L-homocysteine. It participates in secondary metabolite biosynthesis; terpenoid biosynthesis. O-methyltransferase; part of the gene cluster that mediates the biosynthesis of atranorin, a depside of polyketide origin that accumulates in the cortical or medullary layers of lichen thalli. Atr3 methylates the carboxyl group of 4-O-demethylbarbatic acid to yield proatranorin I. Atr3 is also able to methylate the atr2 product proatranorin III to produce the final compound atranorin. The first step in the pathway is performed by the non-reducing polyketide synthase atr1 that produces 4-O-demethylbarbatic acid composed of two 3-methylorsellinic acid (3MOA) moieties. The pathway continues with the actions of the cytochrome P450 monooygenase atr2 that catalizes the oxidation of c-9 and the O-methyltransferase atr3 that performs the methylation of the carboxyl group to yield atranorin, via the proatranorin II and III intermediates if atr2 acts first, or the proatranorin I intermediate if atr3 acts first. This Stereocaulon alpinum (Alpine snow lichen) protein is O-methyltransferase atr3.